Reading from the N-terminus, the 289-residue chain is Cyclin-dependent kinase 2 homolog (289 aa).

The region spanning 4-285 (YHGLEKIGEG…AKQAIEHPYF (282 aa)) is the Protein kinase domain. ATP contacts are provided by residues 10–18 (IGEGTYGVV) and lysine 32. Threonine 14 carries the post-translational modification Phosphothreonine. The residue at position 15 (tyrosine 15) is a Phosphotyrosine. Aspartate 126 acts as the Proton acceptor in catalysis. Phosphothreonine is present on threonine 159.

The protein belongs to the protein kinase superfamily. CMGC Ser/Thr protein kinase family. CDC2/CDKX subfamily. May form a complex composed of at least the catalytic subunit CRK2 and a cyclin. It depends on Mg(2+) as a cofactor.

The protein localises to the cytoplasm. The enzyme catalyses L-seryl-[protein] + ATP = O-phospho-L-seryl-[protein] + ADP + H(+). The catalysed reaction is L-threonyl-[protein] + ATP = O-phospho-L-threonyl-[protein] + ADP + H(+). It carries out the reaction [DNA-directed RNA polymerase] + ATP = phospho-[DNA-directed RNA polymerase] + ADP + H(+). With respect to regulation, phosphorylation at Thr-14 or Tyr-15 inactivates the enzyme, while phosphorylation at Thr-159 activates it. Functionally, serine/threonine-protein kinase. Involved in the control of the cell cycle. Required for entry into S-phase and mitosis. Probable component of the kinase complex that phosphorylates the repetitive C-terminus of RNA polymerase II. The protein is Cyclin-dependent kinase 2 homolog of Plasmodium yoelii yoelii.